The sequence spans 331 residues: Probable protein phosphatase 2C 1 (331 aa).

The disordered stretch occupies residues M1 to R29. The 245-residue stretch at T48–V292 folds into the PPM-type phosphatase domain. The Mn(2+) site is built by D79, G80, D210, and D283. The interval D300–T331 is disordered.

The protein belongs to the PP2C family. Mg(2+) serves as cofactor. It depends on Mn(2+) as a cofactor.

The enzyme catalyses O-phospho-L-seryl-[protein] + H2O = L-seryl-[protein] + phosphate. The catalysed reaction is O-phospho-L-threonyl-[protein] + H2O = L-threonyl-[protein] + phosphate. The polypeptide is Probable protein phosphatase 2C 1 (Oryza sativa subsp. japonica (Rice)).